The chain runs to 242 residues: Probable transcriptional regulatory protein LBA0733 (242 aa).

Positions 1–22 (MSGHSKWHNIQGRKNAQDAKRG) are disordered.

The protein belongs to the TACO1 family.

It is found in the cytoplasm. The polypeptide is Probable transcriptional regulatory protein LBA0733 (Lactobacillus acidophilus (strain ATCC 700396 / NCK56 / N2 / NCFM)).